The primary structure comprises 745 residues: MSLKPRVVDFDETWNKLLTTIKAVVMLEYVERATWNDRFSDIYALCVAYPEPLGERLYTETKIFLENHVRHLHKRVLESEEQVLVMYHRYWEEYSKGADYMDCLYRYLNTQFIKKNKLTEADLQYGYGGVDMNEPLMEIGELALDMWRKLMVEPLQAILIRMLLREIKNDRGGEDPNQKVIHGVINSFVHVEQYKKKFPLKFYQEIFESPFLTETGEYYKQEASNLLQESNCSQYMEKVLGRLKDEEIRCRKYLHPSSYTKVIHECQQRMVADHLQFLHAECHNIIRQEKKNDMANMYVLLRAVSTGLPHMIQELQNHIHDEGLRATSNLTQENMPTLFVESVLEVHGKFVQLINTVLNGDQHFMSALDKALTSVVNYREPKSVCKAPELLAKYCDNLLKKSAKGMTENEVEDRLTSFITVFKYIDDKDVFQKFYARMLAKRLIHGLSMSMDSEEAMINKLKQACGYEFTSKLHRMYTDMSVSADLNNKFNNFIKNQDTVIDLGISFQIYVLQAGAWPLTQAPSSTFAIPQELEKSVQMFELFYSQHFSGRKLTWLHYLCTGEVKMNYLGKPYVAMVTTYQMAVLLAFNNSETVSYKELQDSTQMNEKELTKTIKSLLDVKMINHDSEKEDIDAESSFSLNMNFSSKRTKFKITTSMQKDTPQEMEQTRSAVDEDRKMYLQAAIVRIMKARKVLRHNALIQEVISQSRARFNPSISMIKKCIEVLIDKQYIERSQASADEYSYVA.

Residue lysine 393 is modified to N6-acetyllysine. Threonine 661 is subject to Phosphothreonine. A Cullin neddylation domain is found at 675-735 (DRKMYLQAAI…IDKQYIERSQ (61 aa)). Lysine 689 is covalently cross-linked (Glycyl lysine isopeptide (Lys-Gly) (interchain with G-Cter in NEDD8)).

Belongs to the cullin family. As to quaternary structure, component of multiple Cul2-RING (CRL2) E3 ubiquitin-protein ligase complexes consisting of CUL2, Elongin BC (ELOB and ELOC), RBX1 and a variable substrate-specific adapter; this complex is also known as ECS (Elongin BC-CUL2/5-SOCS-box protein) complex and may consist of CUL2 or CUL5. Component of the ECS(VHL) or CBC(VHL) complex containing CUL2, RBX1, ELOB, ELOC and VHL. Component of the ECS(MED8) complex with the probable substrate recognition component MED8. Component of multiple ECS complexes part of the DesCEND (destruction via C-end degrons) pathway, which contain either KLHDC2, KLHDC3, KLHDC10, APPBP2, FEM1A, FEM1B or FEM1C as substrate-recognition component. Component of the ECS(LRR1) complex with the substrate recognition component LRR1. Component of a CRL2(FEM1B) complex containing CUL2, RBX1, ELOB, ELOC and FEM1B. Component of a CRL2(FEM1C) complex containing CUL2, RBX1, ELOB, ELOC and FEM1C. Part of an E3 ubiquitin-protein ligase complex including ZYG11B, CUL2 and Elongin BC. Part of an E3 ubiquitin-protein ligase complex including ZER1, CUL2 and Elongin BC. Interacts with RBX1, RNF7, FEM1B and TIP120A/CAND1. Found in a complex composed of LIMD1, VHL, EGLN1/PHD2, ELOB and CUL2. Interacts (when neddylated) with ARIH1; leading to activate the E3 ligase activity of ARIH1. Interacts (unneddylated form) with DCUN1D1, DCUN1D2, DCUN1D3, DCUN1D4 and DCUN1D5; these interactions promote the cullin neddylation. Component of VCB (elongins BC/CUL2/VHL) complex that contains at least DCUN1D1, CUL2 and VHL; this complex triggers CUL2 neddylation and consequently cullin ring ligase (CRL) substrates polyubiquitylation. Neddylated; which enhances the ubiquitination activity of ECS (Elongin BC-CUL2/5-SOCS-box protein) E3 ubiquitin-protein ligase complexes. Neddylation leads to structural rearrangment in the complex that allows interaction between the E2 ubiquitin-conjugating enzyme and the acceptor ubiquitin. CBC(VHL) complex formation seems to promote neddylation. Deneddylated via its interaction with the COP9 signalosome (CSN) complex.

The protein localises to the nucleus. It functions in the pathway protein modification; protein ubiquitination. Core component of multiple cullin-RING-based ECS (ElonginB/C-CUL2/5-SOCS-box protein) E3 ubiquitin-protein ligase complexes, which mediate the ubiquitination of target proteins. CUL2 may serve as a rigid scaffold in the complex and may contribute to catalysis through positioning of the substrate and the ubiquitin-conjugating enzyme. The E3 ubiquitin-protein ligase activity of the complex is dependent on the neddylation of the cullin subunit and is inhibited by the association of the deneddylated cullin subunit with TIP120A/CAND1. The functional specificity of the ECS complex depends on the substrate recognition component. ECS(VHL) mediates the ubiquitination of hypoxia-inducible factor (HIF). A number of ECS complexes (containing either KLHDC2, KLHDC3, KLHDC10, APPBP2, FEM1A, FEM1B or FEM1C as substrate-recognition component) are part of the DesCEND (destruction via C-end degrons) pathway, which recognizes a C-degron located at the extreme C terminus of target proteins, leading to their ubiquitination and degradation. ECS complexes and ARIH1 collaborate in tandem to mediate ubiquitination of target proteins. ECS(LRR1) ubiquitinates MCM7 and promotes CMG replisome disassembly by VCP and chromatin extraction during S-phase. In Pongo abelii (Sumatran orangutan), this protein is Cullin-2 (CUL2).